Reading from the N-terminus, the 354-residue chain is Uroporphyrinogen decarboxylase (354 aa).

Substrate contacts are provided by residues 27 to 31 (RQAGR), aspartate 77, tyrosine 154, threonine 209, and histidine 327.

The protein belongs to the uroporphyrinogen decarboxylase family. As to quaternary structure, homodimer.

Its subcellular location is the cytoplasm. The catalysed reaction is uroporphyrinogen III + 4 H(+) = coproporphyrinogen III + 4 CO2. Its pathway is porphyrin-containing compound metabolism; protoporphyrin-IX biosynthesis; coproporphyrinogen-III from 5-aminolevulinate: step 4/4. In terms of biological role, catalyzes the decarboxylation of four acetate groups of uroporphyrinogen-III to yield coproporphyrinogen-III. In Pectobacterium atrosepticum (strain SCRI 1043 / ATCC BAA-672) (Erwinia carotovora subsp. atroseptica), this protein is Uroporphyrinogen decarboxylase.